A 425-amino-acid chain; its full sequence is 3-phosphoshikimate 1-carboxyvinyltransferase (425 aa).

3 residues coordinate 3-phosphoshikimate: Lys-22, Ser-23, and Arg-27. Lys-22 serves as a coordination point for phosphoenolpyruvate. Phosphoenolpyruvate-binding residues include Gly-95 and Arg-123. Residues Ser-169, Ser-170, Gln-171, Ser-197, Asp-313, Asn-336, and Lys-340 each contribute to the 3-phosphoshikimate site. Gln-171 is a binding site for phosphoenolpyruvate. Asp-313 functions as the Proton acceptor in the catalytic mechanism. Arg-344, Arg-386, and Lys-411 together coordinate phosphoenolpyruvate.

It belongs to the EPSP synthase family. In terms of assembly, monomer.

Its subcellular location is the cytoplasm. It carries out the reaction 3-phosphoshikimate + phosphoenolpyruvate = 5-O-(1-carboxyvinyl)-3-phosphoshikimate + phosphate. Its pathway is metabolic intermediate biosynthesis; chorismate biosynthesis; chorismate from D-erythrose 4-phosphate and phosphoenolpyruvate: step 6/7. Catalyzes the transfer of the enolpyruvyl moiety of phosphoenolpyruvate (PEP) to the 5-hydroxyl of shikimate-3-phosphate (S3P) to produce enolpyruvyl shikimate-3-phosphate and inorganic phosphate. The chain is 3-phosphoshikimate 1-carboxyvinyltransferase from Pseudoalteromonas translucida (strain TAC 125).